The chain runs to 462 residues: Integrator complex subunit 12 (462 aa).

The tract at residues 42–132 (GIDSSYRPSQ…PETQSSPITV (91 aa)) is disordered. The span at 59-86 (ISSTKNISIKQEPKISSSLPSGNNNGKV) shows a compositional bias: polar residues. K68 is covalently cross-linked (Glycyl lysine isopeptide (Lys-Gly) (interchain with G-Cter in SUMO2)). The span at 88–124 (TTEKVKKEAEKRPADKMKSDITEGVDIPKKPRLEKPE) shows a compositional bias: basic and acidic residues. Position 128 is a phosphoserine (S128). A PHD-type zinc finger spans residues 159-215 (GLACVVCRQMMVASGNQLVECQECHNLYHRDCHKPQVTDKEANDPRLVWYCARCTRQ). K254 is covalently cross-linked (Glycyl lysine isopeptide (Lys-Gly) (interchain with G-Cter in SUMO2)). The span at 301–328 (SSAGPSTAKLSSTTQNNTGKPATSSANQ) shows a compositional bias: polar residues. Residues 301–462 (SSAGPSTAKL…KKAAQKKLKK (162 aa)) form a disordered region. 2 stretches are compositionally biased toward low complexity: residues 347 to 358 (KIGSNNSTTPTV) and 382 to 437 (VSKV…GPTS). Positions 449-462 (QMVKKKAAQKKLKK) are enriched in basic residues.

Belongs to the Integrator subunit 12 family. Component of the Integrator complex, composed of core subunits INTS1, INTS2, INTS3, INTS4, INTS5, INTS6, INTS7, INTS8, INTS9/RC74, INTS10, INTS11/CPSF3L, INTS12, INTS13, INTS14 and INTS15. The core complex associates with protein phosphatase 2A subunits PPP2CA and PPP2R1A, to form the Integrator-PP2A (INTAC) complex. Post-translationally, dephosphorylated at Ser-128 by the PNUTS-PP1 complex, promoting RNA polymerase II transcription pause-release.

Its subcellular location is the nucleus. Component of the integrator complex, a multiprotein complex that terminates RNA polymerase II (Pol II) transcription in the promoter-proximal region of genes. The integrator complex provides a quality checkpoint during transcription elongation by driving premature transcription termination of transcripts that are unfavorably configured for transcriptional elongation: the complex terminates transcription by (1) catalyzing dephosphorylation of the C-terminal domain (CTD) of Pol II subunit POLR2A/RPB1 and SUPT5H/SPT5, (2) degrading the exiting nascent RNA transcript via endonuclease activity and (3) promoting the release of Pol II from bound DNA. The integrator complex is also involved in terminating the synthesis of non-coding Pol II transcripts, such as enhancer RNAs (eRNAs), small nuclear RNAs (snRNAs), telomerase RNAs and long non-coding RNAs (lncRNAs). Mediates recruitment of cytoplasmic dynein to the nuclear envelope, probably as component of the integrator complex. The chain is Integrator complex subunit 12 (INTS12) from Pongo abelii (Sumatran orangutan).